The primary structure comprises 589 residues: MALATQSNRIKIGIRPTIDGRRMGVRESLETQTIRMAQSVAQLLQTHIRHTDGTFVECVVADSTIGGVAEAAACADKFKRENVGLTITVTPCWCYGSETIDMDPHMPKAIWGFNGTERPGAVYLAAALAGHSQLGLPAFSIYGTEVQEADDTNIPEDVKEKLLRFARAGLAVASIRGKSYLSIGSVSMGIAGSIVNQAFFQEYLGMRNEYVDMMEIKRRLDRKIYDQEEVDLALSWVKQYCKEGVDVNSLENQRNAEERAELWENVVKMTIITRDLMVGNPKLATLNYAEEALGHNAIAAGFQGQRHWTDHLPNGDFMEAMLNSTYDWNGVRPPYILATENDSLNAIGMLFGHQLTGKAQIFADVRTYWSQDSVERVTGWRPESGFIHLINSGSAALDGTGEHQDAQGNPTLKPAWDVTEEEAKRCLENTRWCPAVHEYFRGGGLSSQFLTKGGIPFTIHRINLIKGLGPVLQIAEGWSIDLPQDVHNKLNQRTNETWPTTWFVPRLTGKGAFTDVYSVMANWGANHCVATHGHVGADLITLASMLRIPVCMHNVSEKNIFRPSAWNGFGQDKEGQDYRACQNFGPLYK.

Active-site proton acceptor residues include Glu-340 and Asp-364. Residues Glu-340, Asp-364, and His-527 each contribute to the Mn(2+) site.

The protein belongs to the L-fucose isomerase family. The cofactor is Mn(2+).

Its subcellular location is the cytoplasm. It carries out the reaction L-fucose = L-fuculose. The protein operates within carbohydrate degradation; L-fucose degradation; L-lactaldehyde and glycerone phosphate from L-fucose: step 1/3. Converts the aldose L-fucose into the corresponding ketose L-fuculose. This Haemophilus influenzae (strain ATCC 51907 / DSM 11121 / KW20 / Rd) protein is L-fucose isomerase.